A 462-amino-acid chain; its full sequence is MQLRKMPTIKREQECADSRNNMENILVLSSNIPDMSESMDSSNDMLYSEGAPAKNKNSSCRRKREFIPDEKKDAMYWEKRRKNNEAAKRSREKRRLNDMVLENKLIALGEENASLKTELLSLKLKFGLISSASYAQEIQKVTTSTAMYFQEYSSSKPNVMSYNSDHEHSVMTSSCISVIKHSPQSSLSDVSEASSVEHVQPSTVQSNCRSTDINFQRIKQEPMERENFSRDAREDSNTFQGSIYTNYIGNTFSGYSHSPPLLHINRSSSNSPRTSEADEGVVGKTSDGEDEQQVPKGPIHSPVELKNGHTTIIKVPEVNSSALPHKLRIKAKAMQIKVEALESELNSTQKLTLPIDMSSKRHLQLEKHNSETMVHSSLSPLSVQVTNIQDWPLKPGQWHHRELDKIPSVCKTSGIVDIKDNVFKASESESLYLKQGIANLSAEVATLKRLIVTQEICASNSS.

In terms of domain architecture, bZIP spans 73-136 (DAMYWEKRRK…GLISSASYAQ (64 aa)). The basic motif stretch occupies residues 79-95 (KRRKNNEAAKRSREKRR). The interval 101 to 122 (LENKLIALGEENASLKTELLSL) is leucine-zipper. The disordered stretch occupies residues 263–304 (HINRSSSNSPRTSEADEGVVGKTSDGEDEQQVPKGPIHSPVE). Residues 265 to 274 (NRSSSNSPRT) show a composition bias toward polar residues.

Belongs to the bZIP family. NFIL3 subfamily. In terms of assembly, homodimer. Binds DNA as a dimer.

It is found in the cytoplasm. Its subcellular location is the nucleus. Its function is as follows. May act as a transcriptional regulator of a number of proteins of the circadian clock. This is Nuclear factor interleukin-3-regulated protein (nfil3) from Xenopus tropicalis (Western clawed frog).